The primary structure comprises 465 residues: 23S rRNA (uracil(1939)-C(5))-methyltransferase RlmD (465 aa).

Positions 1 to 24 (MSEAVPLSTRRASSAGDAPGRAPV) are disordered. A TRAM domain is found at 16–80 (GDAPGRAPVL…PTYEQAQVVD (65 aa)). Cysteine 93, cysteine 99, cysteine 102, and cysteine 181 together coordinate [4Fe-4S] cluster. S-adenosyl-L-methionine-binding residues include glutamine 289, phenylalanine 318, asparagine 323, glutamate 339, asparagine 367, and aspartate 388. Cysteine 421 (nucleophile) is an active-site residue.

It belongs to the class I-like SAM-binding methyltransferase superfamily. RNA M5U methyltransferase family. RlmD subfamily.

The catalysed reaction is uridine(1939) in 23S rRNA + S-adenosyl-L-methionine = 5-methyluridine(1939) in 23S rRNA + S-adenosyl-L-homocysteine + H(+). Catalyzes the formation of 5-methyl-uridine at position 1939 (m5U1939) in 23S rRNA. This is 23S rRNA (uracil(1939)-C(5))-methyltransferase RlmD from Burkholderia mallei (strain ATCC 23344).